The sequence spans 159 residues: Ribonuclease H (159 aa).

The 144-residue stretch at 10–153 (TQTQVVIYTD…ADALANQGVE (144 aa)) folds into the RNase H type-1 domain. Mg(2+)-binding residues include D19, E57, D79, and D145.

The protein belongs to the RNase H family. As to quaternary structure, monomer. It depends on Mg(2+) as a cofactor.

The protein resides in the cytoplasm. It carries out the reaction Endonucleolytic cleavage to 5'-phosphomonoester.. Its function is as follows. Endonuclease that specifically degrades the RNA of RNA-DNA hybrids. The protein is Ribonuclease H of Polaromonas sp. (strain JS666 / ATCC BAA-500).